Here is a 175-residue protein sequence, read N- to C-terminus: Ribosome maturation factor RimM (175 aa).

Residues 99–171 (AGEYYWFQLK…RILFDLPDGL (73 aa)) enclose the PRC barrel domain.

The protein belongs to the RimM family. In terms of assembly, binds ribosomal protein uS19.

The protein localises to the cytoplasm. Functionally, an accessory protein needed during the final step in the assembly of 30S ribosomal subunit, possibly for assembly of the head region. Essential for efficient processing of 16S rRNA. May be needed both before and after RbfA during the maturation of 16S rRNA. It has affinity for free ribosomal 30S subunits but not for 70S ribosomes. The chain is Ribosome maturation factor RimM from Syntrophotalea carbinolica (strain DSM 2380 / NBRC 103641 / GraBd1) (Pelobacter carbinolicus).